The sequence spans 186 residues: Nascent polypeptide-associated complex subunit beta (186 aa).

One can recognise an NAC-A/B domain in the interval 65–130; it reads GADDKKLQTT…GEEKELTELV (66 aa). Residues 153-186 are disordered; it reads QNMQKQAGAEGKKDEDEDDIPDLVEGENFESNVE. Positions 167–186 are enriched in acidic residues; sequence EDEDDIPDLVEGENFESNVE.

The protein belongs to the NAC-beta family. As to quaternary structure, part of the nascent polypeptide-associated complex (NAC), consisting of egd2 and egd1. NAC associates with ribosomes via egd1.

The protein resides in the cytoplasm. Its subcellular location is the nucleus. In terms of biological role, component of the nascent polypeptide-associated complex (NAC), a dynamic component of the ribosomal exit tunnel, protecting the emerging polypeptides from interaction with other cytoplasmic proteins to ensure appropriate nascent protein targeting. The NAC complex also promotes mitochondrial protein import by enhancing productive ribosome interactions with the outer mitochondrial membrane and blocks the inappropriate interaction of ribosomes translating non-secretory nascent polypeptides with translocation sites in the membrane of the endoplasmic reticulum. EGD1 may act as a transcription factor that exert a negative effect on the expression of several genes that are transcribed by RNA polymerase II. The protein is Nascent polypeptide-associated complex subunit beta (egd1) of Aspergillus fumigatus (strain ATCC MYA-4609 / CBS 101355 / FGSC A1100 / Af293) (Neosartorya fumigata).